The sequence spans 414 residues: O-methyltransferase sirM (414 aa).

Asp270 contacts S-adenosyl-L-methionine. His321 (proton acceptor) is an active-site residue.

Belongs to the class I-like SAM-binding methyltransferase superfamily. Cation-independent O-methyltransferase family. COMT subfamily.

The protein operates within mycotoxin biosynthesis. Its function is as follows. O-methyltransferase; part of the gene cluster that mediates the biosynthesis of sirodesmin PL, an epipolythiodioxopiperazine (ETP) characterized by a disulfide bridged cyclic dipeptide and that acts as a phytotoxin which is involved in the blackleg didease of canola. SirD catalyzes the O-prenylation of L-tyrosine (L-Tyr) in the presence of dimethylallyl diphosphate (DMAPP) to yield 4-O-dimethylallyl-L-Tyr, and therefore represents probably the first pathway-specific enzyme in the biosynthesis of sirodesmin PL. 4-O-dimethylallyl-L-Tyr, then undergoes condensation with L-Ser in a reaction catalyzed by the non-ribosomal peptide synthase sirP to form the diketopiperazine (DKP) backbone. Further bishydroxylation of the DKP performed by the cytochrome P450 monooxygenase sirC leads to the production of the intermediate phomamide. This step is essential to form the reactive thiol group required for toxicity of sirodesmin PL. The next steps of sirodesmin biosynthesis are not well understood yet, but some predictions could be made from intermediate compounds identification. Phomamide is converted into phomalizarine via oxidation, probably by sirT. Further oxidation, methylation (by sirM or sirN) and reduction steps convert phomalizarine to deacetyl sirodesmin. Finally, acetyltransferase sirH probably acetylates deacetyl sirodesmin to produce sirodesmin PL. In Leptosphaeria maculans (Blackleg fungus), this protein is O-methyltransferase sirM.